We begin with the raw amino-acid sequence, 425 residues long: Histidine--tRNA ligase 1 (425 aa).

This sequence belongs to the class-II aminoacyl-tRNA synthetase family. As to quaternary structure, homodimer.

Its subcellular location is the cytoplasm. The enzyme catalyses tRNA(His) + L-histidine + ATP = L-histidyl-tRNA(His) + AMP + diphosphate + H(+). The protein is Histidine--tRNA ligase 1 of Bacillus cereus (strain ZK / E33L).